Reading from the N-terminus, the 387-residue chain is Galactokinase (387 aa).

36 to 39 (EHTD) is a substrate binding site. ATP is bound by residues Ser70 and 125 to 131 (GAGLSSS). Residues Ser131 and Glu163 each contribute to the Mg(2+) site. The Proton acceptor role is filled by Asp175. Residue Tyr227 participates in substrate binding.

The protein belongs to the GHMP kinase family. GalK subfamily.

Its subcellular location is the cytoplasm. The enzyme catalyses alpha-D-galactose + ATP = alpha-D-galactose 1-phosphate + ADP + H(+). Its pathway is carbohydrate metabolism; galactose metabolism. Its function is as follows. Catalyzes the transfer of the gamma-phosphate of ATP to D-galactose to form alpha-D-galactose-1-phosphate (Gal-1-P). This is Galactokinase from Streptomyces coelicolor (strain ATCC BAA-471 / A3(2) / M145).